The chain runs to 251 residues: 3-dehydroquinate dehydratase (251 aa).

Residues 47-49 and arginine 83 contribute to the 3-dehydroquinate site; that span reads EWR. Residue histidine 144 is the Proton donor/acceptor of the active site. Lysine 171 functions as the Schiff-base intermediate with substrate in the catalytic mechanism. Residues arginine 214, serine 233, and glutamine 237 each coordinate 3-dehydroquinate.

It belongs to the type-I 3-dehydroquinase family. Homodimer.

It carries out the reaction 3-dehydroquinate = 3-dehydroshikimate + H2O. It participates in metabolic intermediate biosynthesis; chorismate biosynthesis; chorismate from D-erythrose 4-phosphate and phosphoenolpyruvate: step 3/7. Functionally, involved in the third step of the chorismate pathway, which leads to the biosynthesis of aromatic amino acids. Catalyzes the cis-dehydration of 3-dehydroquinate (DHQ) and introduces the first double bond of the aromatic ring to yield 3-dehydroshikimate. This is 3-dehydroquinate dehydratase from Klebsiella pneumoniae (strain 342).